The sequence spans 131 residues: Small ribosomal subunit protein uS8 (131 aa).

Belongs to the universal ribosomal protein uS8 family. As to quaternary structure, part of the 30S ribosomal subunit. Contacts proteins S5 and S12.

One of the primary rRNA binding proteins, it binds directly to 16S rRNA central domain where it helps coordinate assembly of the platform of the 30S subunit. The chain is Small ribosomal subunit protein uS8 from Cupriavidus necator (strain ATCC 17699 / DSM 428 / KCTC 22496 / NCIMB 10442 / H16 / Stanier 337) (Ralstonia eutropha).